The chain runs to 78 residues: Probable Vpr-like protein (78 aa).

The short motif at 35 to 43 is the Nuclear export signal element; it reads AIRLLQGLF. The Nuclear localization signal motif lies at 45–54; sequence RYRFKKPRVD.

Its subcellular location is the virion. It is found in the host nucleus. Functionally, seems to function as a Vpr-like protein, since it mediates host cell cycle arrest in G2 phase. Cell cycle arrest creates a favorable environment for maximizing viral expression and production. This Feline immunodeficiency virus (isolate Petaluma) (FIV) protein is Probable Vpr-like protein.